Consider the following 180-residue polypeptide: tRNA (cytidine(56)-2'-O)-methyltransferase (180 aa).

Residues leucine 84 and 112–116 (GAEKV) contribute to the S-adenosyl-L-methionine site.

This sequence belongs to the aTrm56 family. As to quaternary structure, homodimer.

Its subcellular location is the cytoplasm. The catalysed reaction is cytidine(56) in tRNA + S-adenosyl-L-methionine = 2'-O-methylcytidine(56) in tRNA + S-adenosyl-L-homocysteine + H(+). In terms of biological role, specifically catalyzes the AdoMet-dependent 2'-O-ribose methylation of cytidine at position 56 in tRNAs. The polypeptide is tRNA (cytidine(56)-2'-O)-methyltransferase (Haloarcula marismortui (strain ATCC 43049 / DSM 3752 / JCM 8966 / VKM B-1809) (Halobacterium marismortui)).